The primary structure comprises 378 residues: Heterogeneous nuclear ribonucleoprotein A3 (378 aa).

Met-1 is modified (N-acetylmethionine). Residues 1–10 are compositionally biased toward pro residues; it reads MEVKPPPGRP. The disordered stretch occupies residues 1 to 34; the sequence is MEVKPPPGRPQPDSGRRRRRRGEEGHDPKEPEQL. Lys-4 participates in a covalent cross-link: Glycyl lysine isopeptide (Lys-Gly) (interchain with G-Cter in SUMO2). At Ser-14 the chain carries Phosphoserine. A compositionally biased stretch (basic and acidic residues) spans 21 to 34; it reads RGEEGHDPKEPEQL. Residues 35–118 form the RRM 1 domain; sequence RKLFIGGLSF…RAVSREDSVK (84 aa). Residue Lys-36 forms a Glycyl lysine isopeptide (Lys-Gly) (interchain with G-Cter in SUMO2) linkage. Ser-43 is subject to Phosphoserine. Arg-52 carries the dimethylated arginine; alternate modification. Arg-52 carries the omega-N-methylarginine; alternate modification. Arg-76 bears the Omega-N-methylarginine mark. Phosphoserine is present on residues Ser-112 and Ser-116. A Glycyl lysine isopeptide (Lys-Gly) (interchain with G-Cter in SUMO2) cross-link involves residue Lys-118. Thr-124 is subject to Phosphothreonine. One can recognise an RRM 2 domain in the interval 126-205; it reads KKIFVGGIKE…CEVKKALSKQ (80 aa). Lys-134 bears the N6-acetyllysine; alternate mark. Lys-134 is covalently cross-linked (Glycyl lysine isopeptide (Lys-Gly) (interchain with G-Cter in SUMO2); alternate). Residues Lys-151 and Lys-182 each participate in a glycyl lysine isopeptide (Lys-Gly) (interchain with G-Cter in SUMO2) cross-link. The interval 204 to 225 is disordered; sequence KQEMQSAGSQRGRGGGSGNFMG. Arg-214, Arg-216, Arg-226, Arg-239, and Arg-246 each carry omega-N-methylarginine; alternate. 5 positions are modified to asymmetric dimethylarginine; alternate: Arg-214, Arg-216, Arg-226, Arg-239, and Arg-246. Over residues 214-225 the composition is skewed to gly residues; sequence RGRGGGSGNFMG. Arg-257 is modified (omega-N-methylarginine). Arg-286 carries the post-translational modification Asymmetric dimethylarginine. The disordered stretch occupies residues 336–378; sequence SGQQQSNYGPMKGGSFGGRSSGSPYGGGYGSGGGSGGYGSRRF. Positions 346 to 378 are enriched in gly residues; sequence MKGGSFGGRSSGSPYGGGYGSGGGSGGYGSRRF. Position 350 is a phosphoserine (Ser-350). Position 354 is an omega-N-methylarginine (Arg-354). Phosphoserine is present on Ser-358. Phosphotyrosine is present on residues Tyr-360 and Tyr-364. Phosphoserine is present on residues Ser-366 and Ser-370. Tyr-373 is modified (phosphotyrosine). Ser-375 is subject to Phosphoserine.

Identified in the spliceosome C complex.

The protein localises to the nucleus. In terms of biological role, plays a role in cytoplasmic trafficking of RNA. Binds to the cis-acting response element, A2RE. May be involved in pre-mRNA splicing. The chain is Heterogeneous nuclear ribonucleoprotein A3 (HNRNPA3) from Homo sapiens (Human).